The chain runs to 248 residues: 2,3-bisphosphoglycerate-dependent phosphoglycerate mutase (248 aa).

Residues 8–15 (RHGESAWN), 21–22 (TG), Arg60, 87–90 (EKHY), Lys98, 114–115 (RR), and 183–184 (GN) contribute to the substrate site. His9 functions as the Tele-phosphohistidine intermediate in the catalytic mechanism. Glu87 serves as the catalytic Proton donor/acceptor.

The protein belongs to the phosphoglycerate mutase family. BPG-dependent PGAM subfamily.

It carries out the reaction (2R)-2-phosphoglycerate = (2R)-3-phosphoglycerate. It participates in carbohydrate degradation; glycolysis; pyruvate from D-glyceraldehyde 3-phosphate: step 3/5. Catalyzes the interconversion of 2-phosphoglycerate and 3-phosphoglycerate. The polypeptide is 2,3-bisphosphoglycerate-dependent phosphoglycerate mutase (Bacteroides fragilis (strain ATCC 25285 / DSM 2151 / CCUG 4856 / JCM 11019 / LMG 10263 / NCTC 9343 / Onslow / VPI 2553 / EN-2)).